Reading from the N-terminus, the 183-residue chain is MNKDNLIQNYAVALFNNALLDNIQVTIFEEITLLNRIIEDSFDIKEFLISPIVNKIDKINVINSLIKNTKLNKIVNNFLLLLIKNSRTHILSNIVEAYNKLLYESRNIKIVQVISSNQLQPREQEWIQYRIEKELQQKTALFFDIDNTIIGGIVIKYDNVLRDYSIKGSLEKIAKCLKNVKVC.

It belongs to the ATPase delta chain family. F-type ATPases have 2 components, F(1) - the catalytic core - and F(0) - the membrane proton channel. F(1) has five subunits: alpha(3), beta(3), gamma(1), delta(1), epsilon(1). F(0) has three main subunits: a(1), b(2) and c(10-14). The alpha and beta chains form an alternating ring which encloses part of the gamma chain. F(1) is attached to F(0) by a central stalk formed by the gamma and epsilon chains, while a peripheral stalk is formed by the delta and b chains.

It localises to the cell inner membrane. Its function is as follows. F(1)F(0) ATP synthase produces ATP from ADP in the presence of a proton or sodium gradient. F-type ATPases consist of two structural domains, F(1) containing the extramembraneous catalytic core and F(0) containing the membrane proton channel, linked together by a central stalk and a peripheral stalk. During catalysis, ATP synthesis in the catalytic domain of F(1) is coupled via a rotary mechanism of the central stalk subunits to proton translocation. Functionally, this protein is part of the stalk that links CF(0) to CF(1). It either transmits conformational changes from CF(0) to CF(1) or is implicated in proton conduction. This Rickettsia typhi (strain ATCC VR-144 / Wilmington) protein is ATP synthase subunit delta.